Consider the following 376-residue polypeptide: Glycerol-3-phosphate acyltransferase 9 (376 aa).

At 1–78 the chain is on the cytoplasmic side; the sequence is MSSTAGRLVT…SNPPEPWNWN (78 aa). A Phosphoserine modification is found at Ser13. The next 3 membrane-spanning stretches (helical) occupy residues 79–99, 102–122, and 135–155; these read IYLF…LFPL, FTLA…NALL, and VLVE…VKYH. The Cytoplasmic segment spans residues 156-376; that stretch reads GPRPSIRPKQ…ESILARLEEK (221 aa). Residues 168–180 form a catalytic region; that stretch reads VANHTSMIDFIVL. The HXXXXD motif signature appears at 171 to 176; the sequence is HTSMID. 209–218 contacts sn-glycerol 3-phosphate; the sequence is GCIWFNRSEA. The tract at residues 242–262 is glycerol-3-phosphate binding; that stretch reads IFPEGTCVNNNYTVMFKKGAF. The segment at 266–275 is catalytic; that stretch reads CTVCPIAIKY. The segment at 369 to 373 is endoplasmic reticulum targeting; that stretch reads ILARL.

Belongs to the 1-acyl-sn-glycerol-3-phosphate acyltransferase family. As to quaternary structure, self-interacts. Interacts with LPAT2 and LPCAT2. Up-regulated during embryogenesis. Expressed in seedlings, leaves, stems, roots, floral buds, flowers, pollen, and siliques at various developmental stages.

Its subcellular location is the endoplasmic reticulum membrane. It carries out the reaction sn-glycerol 3-phosphate + an acyl-CoA = a 1-acyl-sn-glycero-3-phosphate + CoA. The protein operates within glycerolipid metabolism; triacylglycerol biosynthesis. Its function is as follows. Essential protein. Required for male and female gametophytes development. Exhibits sn-1 acyltransferase activity with high specificity for acyl-coenzyme A, thus triggering storage lipid biosynthesis and playing an important role in the Kennedy pathway of glycerolipid biosynthesis. Catalyzes triacylglycerol (TAG) accumulation involved in membrane lipid and oil biosynthesis, especially in seeds. Also contributes to the biosynthesis of both polar lipids and TAG in developing leaves, as well as lipid droplet production in developing pollen grains. Seems to not contribute to surface lipid biosynthesis (e.g. waxes and cutin). This is Glycerol-3-phosphate acyltransferase 9 from Arabidopsis thaliana (Mouse-ear cress).